The primary structure comprises 134 residues: uncharacterized protein (134 aa).

Positions 1–37 (MSYIKRDHTALRDIAMKTFLKVVGLAASLSAASVAFS) are cleaved as a signal peptide.

This is an uncharacterized protein from Coxiella burnetii (strain RSA 493 / Nine Mile phase I).